A 427-amino-acid polypeptide reads, in one-letter code: Serine--tRNA ligase (427 aa).

228–230 (TSE) contributes to the L-serine binding site. Position 259 to 261 (259 to 261 (RSE)) interacts with ATP. Residue Glu282 coordinates L-serine. 346–349 (EISS) contacts ATP. Ser384 is a binding site for L-serine.

It belongs to the class-II aminoacyl-tRNA synthetase family. Type-1 seryl-tRNA synthetase subfamily. As to quaternary structure, homodimer. The tRNA molecule binds across the dimer.

It localises to the cytoplasm. The enzyme catalyses tRNA(Ser) + L-serine + ATP = L-seryl-tRNA(Ser) + AMP + diphosphate + H(+). It catalyses the reaction tRNA(Sec) + L-serine + ATP = L-seryl-tRNA(Sec) + AMP + diphosphate + H(+). The protein operates within aminoacyl-tRNA biosynthesis; selenocysteinyl-tRNA(Sec) biosynthesis; L-seryl-tRNA(Sec) from L-serine and tRNA(Sec): step 1/1. Its function is as follows. Catalyzes the attachment of serine to tRNA(Ser). Is also able to aminoacylate tRNA(Sec) with serine, to form the misacylated tRNA L-seryl-tRNA(Sec), which will be further converted into selenocysteinyl-tRNA(Sec). This chain is Serine--tRNA ligase, found in Ehrlichia ruminantium (strain Welgevonden).